The sequence spans 317 residues: Malate dehydrogenase (317 aa).

NAD(+) contacts are provided by residues 15-20 and D39; that span reads GSGNIG. The substrate site is built by R88 and R94. NAD(+) contacts are provided by residues N101 and 124-126; that span reads VTN. Residues N126 and R157 each contribute to the substrate site. Catalysis depends on H181, which acts as the Proton acceptor.

The protein belongs to the LDH/MDH superfamily. MDH type 3 family.

It catalyses the reaction (S)-malate + NAD(+) = oxaloacetate + NADH + H(+). Catalyzes the reversible oxidation of malate to oxaloacetate. The protein is Malate dehydrogenase of Ehrlichia ruminantium (strain Gardel).